The following is a 367-amino-acid chain: Cyclin-D5-1 (367 aa).

The disordered stretch occupies residues 307–333 (QPTSPASKSTTTTTGKRSSSSSCSEST).

Belongs to the cyclin family. Cyclin D subfamily.

The chain is Cyclin-D5-1 (CYCD5-1) from Oryza sativa subsp. japonica (Rice).